Consider the following 148-residue polypeptide: UPF0178 protein Mlg_1612 (148 aa).

Belongs to the UPF0178 family.

The chain is UPF0178 protein Mlg_1612 from Alkalilimnicola ehrlichii (strain ATCC BAA-1101 / DSM 17681 / MLHE-1).